The chain runs to 299 residues: Transcription factor srbB (299 aa).

Disordered stretches follow at residues 1-33 (MAYN…DPLS) and 81-204 (ISGF…NAAK). A compositionally biased stretch (low complexity) spans 161–170 (PVTSQATTSP). The segment covering 188–199 (RSLSTDSQTATG) has biased composition (polar residues). Positions 203–216 (AKRAAHNIIEKRYR) are basic motif. Residues 203–264 (AKRAAHNIIE…TNAIAYMQEL (62 aa)) form the bHLH domain. The helix-loop-helix motif stretch occupies residues 217–264 (TNMNAKFVALEKAMSGSGVQKPTKGGSGPASLKKSEILTNAIAYMQEL). Positions 254-281 (LTNAIAYMQELQDQNAALQKELALLKQN) form a coiled coil.

The protein resides in the nucleus. Its function is as follows. Key transcription factors critical for hypoxia adaptation and virulence. Plays a major role in regulation of heme biosynthesis and carbohydrate metabolism early in the response to hypoxia. This chain is Transcription factor srbB, found in Aspergillus fumigatus (strain ATCC MYA-4609 / CBS 101355 / FGSC A1100 / Af293) (Neosartorya fumigata).